The sequence spans 67 residues: UPF0434 protein RALTA_A0561 (67 aa).

The protein belongs to the UPF0434 family.

The chain is UPF0434 protein RALTA_A0561 from Cupriavidus taiwanensis (strain DSM 17343 / BCRC 17206 / CCUG 44338 / CIP 107171 / LMG 19424 / R1) (Ralstonia taiwanensis (strain LMG 19424)).